The following is a 377-amino-acid chain: Presenilin-associated rhomboid-like protein, mitochondrial (377 aa).

A mitochondrion-targeting transit peptide spans 1-50; that stretch reads MALQGWVQRGWRCGPAWAPPLGGGYRELSATQAPRLLGRRFNLFVQQKCG. The Mitochondrial matrix segment spans residues 51 to 99; it reads FRKAPRKVEPRRSDTGSSGEAYKRSALIPPLEETVFYPSPYPIRTLVKP. Residues Ser63 and Ser68 each carry the phosphoserine modification. The helical transmembrane segment at 100–119 threads the bilayer; sequence FFFTIGFTGCAFGSAAIWQY. The Mitochondrial intermembrane segment spans residues 120 to 165; that stretch reads ESLKSRVQSYFDGIKADWLDSIRPQKEGNLRKEINKWWNSLSDGQR. A helical membrane pass occupies residues 166–185; the sequence is TVTGIIAANALVFCLWRVPS. At 186 to 205 the chain is on the mitochondrial matrix side; it reads LQRTMIRYFTSNPASKVLCS. The helical transmembrane segment at 206–228 threads the bilayer; the sequence is PMLLSTFSHFSLFHMAANMYVLW. At 229–242 the chain is on the mitochondrial intermembrane side; that stretch reads SFSSSIVNILGQEQ. Residues 243-260 form a helical membrane-spanning segment; it reads FVAVYLSAGVISNFVSYV. The Mitochondrial matrix portion of the chain corresponds to 261–270; the sequence is CKVATGRYGP. The chain crosses the membrane as a helical span at residues 271-287; sequence SLGASGAIMTVLAAVCT. Ser275 serves as the catalytic Nucleophile. Over 288–293 the chain is Mitochondrial intermembrane; sequence KIPEGR. Residues 294–316 traverse the membrane as a helical segment; it reads LAIIFLPVFTFTAGNALKAIIAM. Topologically, residues 317 to 330 are mitochondrial matrix; the sequence is DTAGMILGWKFFDH. A helical membrane pass occupies residues 331-352; the sequence is AAHLGGALFGIWYITYGHELIW. Residue His333 is part of the active site. The Mitochondrial intermembrane segment spans residues 353 to 377; that stretch reads KNREPLVKIWHEIRTNGPKKGGGSK.

The protein belongs to the peptidase S54 family. As to quaternary structure, interacts with PSEN1 and PSEN2. Binds OPA1. In terms of processing, P-beta is proteolytically processed (beta-cleavage) in a PARL-dependent manner.

It localises to the mitochondrion inner membrane. It is found in the nucleus. It catalyses the reaction Cleaves type-1 transmembrane domains using a catalytic dyad composed of serine and histidine that are contributed by different transmembrane domains.. Its function is as follows. Required for the control of apoptosis during postnatal growth. Essential for proteolytic processing of an antiapoptotic form of OPA1 which prevents the release of mitochondrial cytochrome c in response to intrinsic apoptotic signals. Required for the maturation of PINK1 into its 52kDa mature form after its cleavage by mitochondrial-processing peptidase (MPP). Promotes cleavage of serine/threonine-protein phosphatase PGAM5 in damaged mitochondria in response to loss of mitochondrial membrane potential. Mediates differential cleavage of PINK1 and PGAM5 depending on the health status of mitochondria, disassociating from PINK1 and associating with PGAM5 in response to mitochondrial membrane potential loss. Required for processing of CLPB into a form with higher protein disaggregase activity by removing an autoinhibitory N-terminal peptide. Promotes processing of DIABLO/SMAC in the mitochondrion which is required for DIABLO apoptotic activity. Also required for cleavage of STARD7 and TTC19. Promotes changes in mitochondria morphology regulated by phosphorylation of P-beta domain. This is Presenilin-associated rhomboid-like protein, mitochondrial (Parl) from Mus musculus (Mouse).